The following is a 697-amino-acid chain: General transcription factor IIH subunit 1 (697 aa).

Low complexity predominate over residues 115-136 (LPVSASNGSNTTSPTNGTSPIN). Disordered stretches follow at residues 115–141 (LPVS…TSPT) and 228–250 (KNDS…ADVR). BSD domains follow at residues 174–231 (LSKL…KNDS) and 255–307 (TPNA…YFYR). Residues 412–422 (KNLKKTKKDEN) are compositionally biased toward basic and acidic residues. Residues 412–462 (KNLKKTKKDENSTSTPTTTTTTTNTTNTTNTTTTTTTNNTTIKDPNLYNGD) are disordered. Positions 423-452 (STSTPTTTTTTTNTTNTTNTTTTTTTNNTT) are enriched in low complexity.

Belongs to the TFB1 family. Component of the 7-subunit TFIIH core complex composed of XPB/repB, XPD/repD, gtf2h1, gtf2h2, gtf2h3, gtf2h4 and gtf2h5, which is active in NER. The core complex associates with the 3-subunit CDK-activating kinase (CAK) module composed of cycH/cyclin H, cdk7 and mnat1 to form the 10-subunit holoenzyme (holo-TFIIH) active in transcription.

Its subcellular location is the nucleus. In terms of biological role, component of the general transcription and DNA repair factor IIH (TFIIH) core complex, which is involved in general and transcription-coupled nucleotide excision repair (NER) of damaged DNA and, when complexed to CAK, in RNA transcription by RNA polymerase II. In NER, TFIIH acts by opening DNA around the lesion to allow the excision of the damaged oligonucleotide and its replacement by a new DNA fragment. In transcription, TFIIH has an essential role in transcription initiation. When the pre-initiation complex (PIC) has been established, TFIIH is required for promoter opening and promoter escape. Phosphorylation of the C-terminal tail (CTD) of the largest subunit of RNA polymerase II by the kinase module CAK controls the initiation of transcription. The chain is General transcription factor IIH subunit 1 (gtf2h1) from Dictyostelium discoideum (Social amoeba).